We begin with the raw amino-acid sequence, 249 residues long: Probable transcriptional regulatory protein Csal_1845 (249 aa).

The protein belongs to the TACO1 family.

It localises to the cytoplasm. In Chromohalobacter salexigens (strain ATCC BAA-138 / DSM 3043 / CIP 106854 / NCIMB 13768 / 1H11), this protein is Probable transcriptional regulatory protein Csal_1845.